The following is a 657-amino-acid chain: Translation factor GUF1, mitochondrial (657 aa).

A mitochondrion-targeting transit peptide spans 1–39 (MRGCLQSVKWLTSAVRQSQSLTSSTRFPRRLFNTSTLHY). Positions 59 to 239 (ERFRNFCIVA…TVIEQVPAPV (181 aa)) constitute a tr-type G domain. GTP contacts are provided by residues 68-75 (AHVDHGKS), 132-136 (DTPGH), and 186-189 (NKVD).

This sequence belongs to the TRAFAC class translation factor GTPase superfamily. Classic translation factor GTPase family. LepA subfamily.

The protein resides in the mitochondrion inner membrane. The enzyme catalyses GTP + H2O = GDP + phosphate + H(+). Functionally, promotes mitochondrial protein synthesis. May act as a fidelity factor of the translation reaction, by catalyzing a one-codon backward translocation of tRNAs on improperly translocated ribosomes. Binds to mitochondrial ribosomes in a GTP-dependent manner. In Blastomyces gilchristii (strain SLH14081) (Blastomyces dermatitidis), this protein is Translation factor GUF1, mitochondrial.